The chain runs to 327 residues: Ribose-phosphate pyrophosphokinase (327 aa).

51–53 (DGE) serves as a coordination point for ATP. Mg(2+) contacts are provided by His-144 and Asp-183. Lys-207 is an active-site residue. D-ribose 5-phosphate-binding positions include Arg-209, Asp-233, and 237 to 241 (DTGGT).

The protein belongs to the ribose-phosphate pyrophosphokinase family. Class I subfamily. In terms of assembly, homohexamer. Mg(2+) serves as cofactor.

The protein resides in the cytoplasm. It carries out the reaction D-ribose 5-phosphate + ATP = 5-phospho-alpha-D-ribose 1-diphosphate + AMP + H(+). The protein operates within metabolic intermediate biosynthesis; 5-phospho-alpha-D-ribose 1-diphosphate biosynthesis; 5-phospho-alpha-D-ribose 1-diphosphate from D-ribose 5-phosphate (route I): step 1/1. Involved in the biosynthesis of the central metabolite phospho-alpha-D-ribosyl-1-pyrophosphate (PRPP) via the transfer of pyrophosphoryl group from ATP to 1-hydroxyl of ribose-5-phosphate (Rib-5-P). The sequence is that of Ribose-phosphate pyrophosphokinase from Prochlorococcus marinus (strain SARG / CCMP1375 / SS120).